Here is a 213-residue protein sequence, read N- to C-terminus: Ribonuclease T (213 aa).

Positions 28-202 (VVVDVETGGF…YDTEQTARLF (175 aa)) constitute an Exonuclease domain. 4 residues coordinate Mg(2+): Asp-31, Glu-33, His-189, and Asp-194. His-189 functions as the Proton donor/acceptor in the catalytic mechanism.

This sequence belongs to the RNase T family. In terms of assembly, homodimer. The cofactor is Mg(2+).

Its function is as follows. Trims short 3' overhangs of a variety of RNA species, leaving a one or two nucleotide 3' overhang. Responsible for the end-turnover of tRNA: specifically removes the terminal AMP residue from uncharged tRNA (tRNA-C-C-A). Also appears to be involved in tRNA biosynthesis. In Xanthomonas axonopodis pv. citri (strain 306), this protein is Ribonuclease T.